We begin with the raw amino-acid sequence, 87 residues long: Acylphosphatase (87 aa).

Positions 2 to 87 constitute an Acylphosphatase-like domain; it reads RLTALVSGTV…ATGLRDFHVY (86 aa). Catalysis depends on residues arginine 17 and asparagine 35.

The protein belongs to the acylphosphatase family.

The catalysed reaction is an acyl phosphate + H2O = a carboxylate + phosphate + H(+). This is Acylphosphatase (acyP) from Deinococcus geothermalis (strain DSM 11300 / CIP 105573 / AG-3a).